A 756-amino-acid chain; its full sequence is 5-methyltetrahydropteroyltriglutamate--homocysteine methyltransferase (756 aa).

Residues 16-19 and lysine 112 each bind 5-methyltetrahydropteroyltri-L-glutamate; that span reads RELK. Residues 432 to 434 and glutamate 485 each bind L-homocysteine; that span reads IGS. Residues 432-434 and glutamate 485 each bind L-methionine; that span reads IGS. 5-methyltetrahydropteroyltri-L-glutamate-binding positions include 516–517 and tryptophan 562; that span reads RC. Aspartate 600 lines the L-homocysteine pocket. Aspartate 600 provides a ligand contact to L-methionine. Residue glutamate 606 participates in 5-methyltetrahydropteroyltri-L-glutamate binding. Positions 642, 644, and 666 each coordinate Zn(2+). The active-site Proton donor is the histidine 695. Cysteine 727 provides a ligand contact to Zn(2+).

Belongs to the vitamin-B12 independent methionine synthase family. It depends on Zn(2+) as a cofactor.

It carries out the reaction 5-methyltetrahydropteroyltri-L-glutamate + L-homocysteine = tetrahydropteroyltri-L-glutamate + L-methionine. It participates in amino-acid biosynthesis; L-methionine biosynthesis via de novo pathway; L-methionine from L-homocysteine (MetE route): step 1/1. Functionally, catalyzes the transfer of a methyl group from 5-methyltetrahydrofolate to homocysteine resulting in methionine formation. The protein is 5-methyltetrahydropteroyltriglutamate--homocysteine methyltransferase of Haemophilus influenzae (strain PittGG).